Here is a 285-residue protein sequence, read N- to C-terminus: Urease accessory protein UreD (285 aa).

The protein belongs to the UreD family. In terms of assembly, ureD, UreF and UreG form a complex that acts as a GTP-hydrolysis-dependent molecular chaperone, activating the urease apoprotein by helping to assemble the nickel containing metallocenter of UreC. The UreE protein probably delivers the nickel.

The protein resides in the cytoplasm. Its function is as follows. Required for maturation of urease via the functional incorporation of the urease nickel metallocenter. The protein is Urease accessory protein UreD of Citrobacter koseri (strain ATCC BAA-895 / CDC 4225-83 / SGSC4696).